A 473-amino-acid polypeptide reads, in one-letter code: PEP-dependent dihydroxyacetone kinase, phosphoryl donor subunit DhaM (473 aa).

The PTS EIIA type-4 domain occupies 1–137 (MVNLVIVSHS…LAAKQAQLGI (137 aa)). His9 functions as the Tele-phosphohistidine intermediate in the catalytic mechanism. The 88-residue stretch at 155 to 242 (ARSVTVTIRN…SLAAEDFGEH (88 aa)) folds into the HPr domain. Catalysis depends on His169, which acts as the Pros-phosphohistidine intermediate. Residues 266–472 (PLPLAQPARH…IDPAAQRVSC (207 aa)) form a PTS EI-like, N-terminal part region. The Tele-phosphohistidine intermediate role is filled by His432.

Belongs to the PEP-utilizing enzyme family. In terms of assembly, homodimer. The dihydroxyacetone kinase complex is composed of a homodimer of DhaM, a homodimer of DhaK and the subunit DhaL.

It carries out the reaction dihydroxyacetone + phosphoenolpyruvate = dihydroxyacetone phosphate + pyruvate. Functionally, component of the dihydroxyacetone kinase complex, which is responsible for the phosphoenolpyruvate (PEP)-dependent phosphorylation of dihydroxyacetone. DhaM serves as the phosphoryl donor. Is phosphorylated by phosphoenolpyruvate in an EI- and HPr-dependent reaction, and a phosphorelay system on histidine residues finally leads to phosphoryl transfer to DhaL and dihydroxyacetone. The protein is PEP-dependent dihydroxyacetone kinase, phosphoryl donor subunit DhaM of Pantoea ananatis (strain LMG 20103).